The following is a 395-amino-acid chain: Probable L-tyrosine/L-aspartate decarboxylase (395 aa).

Lys242 bears the N6-(pyridoxal phosphate)lysine mark.

This sequence belongs to the group II decarboxylase family. MfnA subfamily. Pyridoxal 5'-phosphate serves as cofactor.

It carries out the reaction L-tyrosine + H(+) = tyramine + CO2. It catalyses the reaction L-aspartate + H(+) = beta-alanine + CO2. Its pathway is cofactor biosynthesis; methanofuran biosynthesis. The protein operates within cofactor biosynthesis; coenzyme A biosynthesis. Functionally, catalyzes the decarboxylation of L-tyrosine to produce tyramine for methanofuran biosynthesis. Can also catalyze the decarboxylation of L-aspartate to produce beta-alanine for coenzyme A (CoA) biosynthesis. The chain is Probable L-tyrosine/L-aspartate decarboxylase from Methanosarcina acetivorans (strain ATCC 35395 / DSM 2834 / JCM 12185 / C2A).